Consider the following 683-residue polypeptide: Putative boron transporter 5 (683 aa).

Topologically, residues 1–38 (MEEERVEGSKRPFQGIIRDVKGRALCYKQDWIAGLRSG) are cytoplasmic. Residues 39–59 (FGILAPTTYVFFASALPVIAF) form a helical membrane-spanning segment. Over 60–80 (GEQLSHDTERSLSTVETLAST) the chain is Extracellular. The helical transmembrane segment at 81 to 101 (ALCGVIHSLLGGQPLLILGVA) threads the bilayer. Topologically, residues 102–126 (EPTVLMYKYLYDFAKGRPELGKQLY) are cytoplasmic. A helical transmembrane segment spans residues 127-147 (LAWVAWVCVWTALLLFLMAIF). Residues 148 to 158 (NMAYIINRFTR) are Extracellular-facing. Residues 159–179 (IAGELFGMLIAVLFLQQTIKG) form a helical membrane-spanning segment. Over 180–200 (MVSEFRIPKGEDSKLEKYQFE) the chain is Cytoplasmic. A helical membrane pass occupies residues 201–221 (WLYTNGLLGLIFTVGLVYTAL). Residues 222–238 (KSRKARSWPYGTGCCRS) lie on the Extracellular side of the membrane. A helical transmembrane segment spans residues 239–259 (FVADYGVPLMVVVWTALSFST). Residues 260 to 294 (PSKLPSGVPRRLVSPLPWDSVSLTHWTVIKDMGKV) are Cytoplasmic-facing. The helical transmembrane segment at 295–315 (SPGYIFAAFIPALMIAGLYFF) threads the bilayer. The Extracellular portion of the chain corresponds to 316–335 (DHSVVSQLAQQKEFNLKNPS). Residues 336-356 (AYHYDILLLGFMVLICGMLGL) traverse the membrane as a helical segment. The Cytoplasmic portion of the chain corresponds to 357-477 (PPSNGVLPQS…EQRVSNLLQS (121 aa)). The helical transmembrane segment at 478–498 (LLVIGAVFALPVIKLIPTSLL) threads the bilayer. At 499-565 (WGYFAYMAID…QILYFGLCYG (67 aa)) the chain is on the extracellular side. The chain crosses the membrane as a helical span at residues 566 to 586 (VTWIPVAGIMFPVLFFLLVAI). At 587 to 683 (RQYLLPKLFK…GDGDMSSSRE (97 aa)) the chain is on the cytoplasmic side.

The protein belongs to the anion exchanger (TC 2.A.31.3) family.

The protein resides in the membrane. In terms of biological role, putative boron transporter. Boron is essential for maintaining the integrity of plants cell walls. This Arabidopsis thaliana (Mouse-ear cress) protein is Putative boron transporter 5 (BOR5).